The following is a 385-amino-acid chain: tRNA 2-selenouridine synthase (385 aa).

A Rhodanese domain is found at 15-138; it reads FIADTPLIDV…ARQFLISTID (124 aa). Residue cysteine 98 is the S-selanylcysteine intermediate of the active site.

Belongs to the SelU family. Monomer.

The enzyme catalyses 5-methylaminomethyl-2-thiouridine(34) in tRNA + selenophosphate + (2E)-geranyl diphosphate + H2O + H(+) = 5-methylaminomethyl-2-selenouridine(34) in tRNA + (2E)-thiogeraniol + phosphate + diphosphate. The catalysed reaction is 5-methylaminomethyl-2-thiouridine(34) in tRNA + (2E)-geranyl diphosphate = 5-methylaminomethyl-S-(2E)-geranyl-thiouridine(34) in tRNA + diphosphate. It carries out the reaction 5-methylaminomethyl-S-(2E)-geranyl-thiouridine(34) in tRNA + selenophosphate + H(+) = 5-methylaminomethyl-2-(Se-phospho)selenouridine(34) in tRNA + (2E)-thiogeraniol. It catalyses the reaction 5-methylaminomethyl-2-(Se-phospho)selenouridine(34) in tRNA + H2O = 5-methylaminomethyl-2-selenouridine(34) in tRNA + phosphate. Involved in the post-transcriptional modification of the uridine at the wobble position (U34) of tRNA(Lys), tRNA(Glu) and tRNA(Gln). Catalyzes the conversion of 2-thiouridine (S2U-RNA) to 2-selenouridine (Se2U-RNA). Acts in a two-step process involving geranylation of 2-thiouridine (S2U) to S-geranyl-2-thiouridine (geS2U) and subsequent selenation of the latter derivative to 2-selenouridine (Se2U) in the tRNA chain. In Nitrosomonas europaea (strain ATCC 19718 / CIP 103999 / KCTC 2705 / NBRC 14298), this protein is tRNA 2-selenouridine synthase.